The sequence spans 409 residues: Putative lipoate-protein ligase A (409 aa).

The BPL/LPL catalytic domain occupies 146-330 (GPDNCRLVFY…RFQKTFKVDG (185 aa)). ATP is bound by residues arginine 188, 193 to 196 (GTVL), and lysine 249. Lysine 249 contacts (R)-lipoate.

It belongs to the LplA family. In terms of assembly, monomer.

The enzyme catalyses L-lysyl-[lipoyl-carrier protein] + (R)-lipoate + ATP = N(6)-[(R)-lipoyl]-L-lysyl-[lipoyl-carrier protein] + AMP + diphosphate + H(+). It functions in the pathway protein modification; protein lipoylation via exogenous pathway; protein N(6)-(lipoyl)lysine from lipoate: step 1/2. It participates in protein modification; protein lipoylation via exogenous pathway; protein N(6)-(lipoyl)lysine from lipoate: step 2/2. Functionally, catalyzes both the ATP-dependent activation of exogenously supplied lipoate to lipoyl-AMP and the transfer of the activated lipoyl onto the lipoyl domains of lipoate-dependent enzymes. The sequence is that of Putative lipoate-protein ligase A (AIM22) from Saccharomyces cerevisiae (strain YJM789) (Baker's yeast).